We begin with the raw amino-acid sequence, 442 residues long: Protoheme IX farnesyltransferase (442 aa).

A unknown region spans residues 1-167; it reads MGVYSLLVLG…AYVQLMKPRL (167 aa). 11 helical membrane passes run 49-69, 76-96, 106-126, 167-187, 194-214, 245-265, 267-287, 308-328, 365-385, 386-406, and 421-441; these read AAAL…RTGA, AVTL…YTAM, VHLT…AWTL, LMWL…SQLG, AATV…SGTF, LAFG…VNLL, AVLG…VLKP, WVAV…VIFL, HIVY…ELTG, LGPL…YFAI, and FHAS…DTMV. Residues 168–439 are prenyltransferase; it reads MWLLCLVAGA…CLLVAVVLDT (272 aa).

It in the C-terminal section; belongs to the UbiA prenyltransferase family. Protoheme IX farnesyltransferase subfamily.

It localises to the cell membrane. The enzyme catalyses heme b + (2E,6E)-farnesyl diphosphate + H2O = Fe(II)-heme o + diphosphate. Its pathway is porphyrin-containing compound metabolism; heme O biosynthesis; heme O from protoheme: step 1/1. Functionally, converts heme B (protoheme IX) to heme O by substitution of the vinyl group on carbon 2 of heme B porphyrin ring with a hydroxyethyl farnesyl side group. The chain is Protoheme IX farnesyltransferase (ctaB) from Halobacterium salinarum (strain ATCC 700922 / JCM 11081 / NRC-1) (Halobacterium halobium).